Consider the following 76-residue polypeptide: Cytochrome c oxidase subunit 6C (76 aa).

The Mitochondrial matrix segment spans residues 4–22; sequence GALLPKPQMRGLLAKRLRV. The chain crosses the membrane as a helical span at residues 23 to 44; the sequence is HIAGAFIVALGVAAAYKFGVAE. At 45 to 76 the chain is on the mitochondrial intermembrane side; that stretch reads PRKKAYAEFYRNYDSMKDFEEMRKAGIFQSAK.

This sequence belongs to the cytochrome c oxidase subunit 6c family. Component of the cytochrome c oxidase (complex IV, CIV), a multisubunit enzyme composed of 14 subunits. The complex is composed of a catalytic core of 3 subunits MT-CO1, MT-CO2 and MT-CO3, encoded in the mitochondrial DNA, and 11 supernumerary subunits COX4I, COX5A, COX5B, COX6A, COX6B, COX6C, COX7A, COX7B, COX7C, COX8 and NDUFA4, which are encoded in the nuclear genome. The complex exists as a monomer or a dimer and forms supercomplexes (SCs) in the inner mitochondrial membrane with NADH-ubiquinone oxidoreductase (complex I, CI) and ubiquinol-cytochrome c oxidoreductase (cytochrome b-c1 complex, complex III, CIII), resulting in different assemblies (supercomplex SCI(1)III(2)IV(1) and megacomplex MCI(2)III(2)IV(2)). Acetylation of Lys-61 is observed in liver mitochondria from fasted mice but not from fed mice.

The protein localises to the mitochondrion inner membrane. It functions in the pathway energy metabolism; oxidative phosphorylation. Its function is as follows. Component of the cytochrome c oxidase, the last enzyme in the mitochondrial electron transport chain which drives oxidative phosphorylation. The respiratory chain contains 3 multisubunit complexes succinate dehydrogenase (complex II, CII), ubiquinol-cytochrome c oxidoreductase (cytochrome b-c1 complex, complex III, CIII) and cytochrome c oxidase (complex IV, CIV), that cooperate to transfer electrons derived from NADH and succinate to molecular oxygen, creating an electrochemical gradient over the inner membrane that drives transmembrane transport and the ATP synthase. Cytochrome c oxidase is the component of the respiratory chain that catalyzes the reduction of oxygen to water. Electrons originating from reduced cytochrome c in the intermembrane space (IMS) are transferred via the dinuclear copper A center (CU(A)) of subunit 2 and heme A of subunit 1 to the active site in subunit 1, a binuclear center (BNC) formed by heme A3 and copper B (CU(B)). The BNC reduces molecular oxygen to 2 water molecules using 4 electrons from cytochrome c in the IMS and 4 protons from the mitochondrial matrix. The sequence is that of Cytochrome c oxidase subunit 6C (Cox6c) from Mus musculus (Mouse).